Consider the following 618-residue polypeptide: Uptake hydrogenase large subunit (618 aa).

Ni(2+) is bound by residues C75, C78, C597, and C600.

It belongs to the [NiFe]/[NiFeSe] hydrogenase large subunit family. Heterodimer of a large and a small subunit. It depends on Ni(2+) as a cofactor.

Its subcellular location is the cell membrane. It carries out the reaction H2 + A = AH2. This enzyme recycles the H(2) produced by nitrogenase to increase the production of ATP and to protect nitrogenase against inhibition or damage by O(2) under carbon- or phosphate-limited conditions. This chain is Uptake hydrogenase large subunit (hoxG), found in Cupriavidus necator (strain ATCC 17699 / DSM 428 / KCTC 22496 / NCIMB 10442 / H16 / Stanier 337) (Ralstonia eutropha).